Reading from the N-terminus, the 1069-residue chain is Protocadherin-8 (1069 aa).

Positions 1 to 29 (MSPVKRWGSPCLFPLQLFSLCWVLSVAQS) are cleaved as a signal peptide. Cadherin domains lie at 30 to 135 (KTVR…APRF), 136 to 245 (PRAQ…SPAF), 247 to 354 (QGAV…APDI), 393 to 497 (QETG…APLF), 498 to 609 (TKPV…SPVL), and 615 to 721 (ANGS…VPAS). Topologically, residues 30–747 (KTVRYSTFEE…SGPSLQWDTP (718 aa)) are extracellular. N-linked (GlcNAc...) asparagine glycosylation occurs at asparagine 616. The disordered stretch occupies residues 719–738 (PASAGSPEHFRPPGSRLAPS). Residues 748 to 768 (LIVIIVLAGSCTLLLAAIIAI) traverse the membrane as a helical segment. Residues 769–1069 (ATTCNRRKKE…SPKKGTNENV (301 aa)) are Cytoplasmic-facing. Disordered stretches follow at residues 777 to 859 (KEVR…TGES), 905 to 927 (REAE…DSDS), and 1031 to 1069 (LSPP…NENV). Composition is skewed to basic and acidic residues over residues 780 to 790 (RKGGALREERP) and 905 to 920 (REAE…KGDS). Phosphoserine is present on serine 1052.

In terms of assembly, the N-terminal extracellular domain forms homophilic interactions; these interactions activate p38 MAPK via TAOK2 and trigger endocytosis. Interacts with CDH2; this interaction may lead to CDH2 cointernalization. Interacts with CDH11. Interacts with TAOK2. In terms of tissue distribution, enriched in brain relative to peripheral tissues, with low expression in the testis. Expressed in hippocampal neurons (at protein level).

It is found in the cell membrane. It localises to the cell projection. The protein localises to the dendrite. Its subcellular location is the presynaptic cell membrane. The protein resides in the postsynaptic cell membrane. Functionally, calcium-dependent cell-adhesion protein. May play a role in activity-induced synaptic reorganization underlying long term memory. Could be involved in CDH2 internalization through TAOK2/p38 MAPK pathway. In hippocampal neurons, may play a role in the down-regulation of dendritic spines, maybe through its action on CDH2 endocytosis. The sequence is that of Protocadherin-8 (Pcdh8) from Rattus norvegicus (Rat).